We begin with the raw amino-acid sequence, 104 residues long: Ig lambda-1 chain C region (104 aa).

Positions 6–99 constitute an Ig-like domain; sequence PSVTLFPPSS…EENTVEKSLS (94 aa). Cys-27 and Cys-85 are joined by a disulfide.

The polypeptide is Ig lambda-1 chain C region (Rattus norvegicus (Rat)).